Here is a 1454-residue protein sequence, read N- to C-terminus: Probable cleavage and polyadenylation specificity factor subunit 1 (1454 aa).

Residues 810–843 (EEKEKKAKQTAAQEKEKETEKKKDDAKNEEDQVN) are disordered. The segment covering 812 to 843 (KEKKAKQTAAQEKEKETEKKKDDAKNEEDQVN) has biased composition (basic and acidic residues).

The protein belongs to the CPSF1 family. CPSF is a heterotetramer composed of four distinct subunits 160 (cpsf-1), 100 (cpsf-2), 70 (cpsf-3), and 30 kDa (cpsf-4).

It is found in the nucleus. Its function is as follows. CPSF plays a key role in pre-mRNA 3'-end formation, recognizing the AAUAAA signal sequence and interacting with poly(A)polymerase and other factors to bring about cleavage and poly(A) addition. This subunit is involved in the RNA recognition step of the polyadenylation reaction. This is Probable cleavage and polyadenylation specificity factor subunit 1 from Caenorhabditis briggsae.